The following is a 254-amino-acid chain: Alcohol dehydrogenase (254 aa).

10 to 33 serves as a coordination point for NAD(+); it reads FVAGLGGIGLDTSKGIVKAGPKNL. Ser-138 is a substrate binding site. Tyr-151 acts as the Proton acceptor in catalysis.

This sequence belongs to the short-chain dehydrogenases/reductases (SDR) family. Homodimer.

The catalysed reaction is a primary alcohol + NAD(+) = an aldehyde + NADH + H(+). The enzyme catalyses a secondary alcohol + NAD(+) = a ketone + NADH + H(+). The chain is Alcohol dehydrogenase (Adh) from Drosophila immigrans (Fruit fly).